Reading from the N-terminus, the 414-residue chain is Probable cytochrome P450 127A1 (414 aa).

A heme-binding site is contributed by Cys364.

The protein belongs to the cytochrome P450 family. Heme serves as cofactor.

In terms of biological role, cytochromes P450 are a group of heme-thiolate monooxygenases. They oxidize a variety of structurally unrelated compounds, including steroids, fatty acids, and xenobiotics. This Sinorhizobium fredii (strain NBRC 101917 / NGR234) protein is Probable cytochrome P450 127A1 (cyp127A1).